Consider the following 877-residue polypeptide: Alanine--tRNA ligase (877 aa).

Residues histidine 562, histidine 566, cysteine 664, and histidine 668 each coordinate Zn(2+).

The protein belongs to the class-II aminoacyl-tRNA synthetase family. The cofactor is Zn(2+).

The protein resides in the cytoplasm. It catalyses the reaction tRNA(Ala) + L-alanine + ATP = L-alanyl-tRNA(Ala) + AMP + diphosphate. In terms of biological role, catalyzes the attachment of alanine to tRNA(Ala) in a two-step reaction: alanine is first activated by ATP to form Ala-AMP and then transferred to the acceptor end of tRNA(Ala). Also edits incorrectly charged Ser-tRNA(Ala) and Gly-tRNA(Ala) via its editing domain. The sequence is that of Alanine--tRNA ligase from Picosynechococcus sp. (strain ATCC 27264 / PCC 7002 / PR-6) (Agmenellum quadruplicatum).